The following is a 401-amino-acid chain: Dual specificity mitogen-activated protein kinase kinase 2 (401 aa).

Met1 carries the N-acetylmethionine modification. Ser23 carries the post-translational modification Phosphoserine. A Protein kinase domain is found at 72 to 370 (FERISELGAG…LKLLMNHAFI (299 aa)). ATP-binding positions include 78–86 (LGAGNGGVV) and Lys101. Asp194 acts as the Proton acceptor in catalysis. A phosphoserine; by RAF mark is found at Ser222 and Ser226. The interval 282–310 (PVVDGADGEPHSVSPRPRPPGRPISVGHG) is disordered. Phosphoserine is present on residues Ser293, Ser295, and Ser306. Residues Thr395 and Thr397 each carry the phosphothreonine modification.

It belongs to the protein kinase superfamily. STE Ser/Thr protein kinase family. MAP kinase kinase subfamily. In terms of assembly, interacts with MORG1. Interacts with SGK1. Interacts with KSR1. Interacts with KSR1 and BRAF; the interaction with KSR1 mediates KSR1-BRAF dimerization. Interacts with GLS. Mg(2+) serves as cofactor. In terms of processing, phosphorylation on Ser/Thr by MAP kinase kinase kinases (RAF or MEKK1) positively regulates the kinase activity. Phosphorylated by MAP2K1/MEK1. Low levels of autophosphorylation have been observed. In terms of tissue distribution, expressed in adult intestine, kidney, liver, lung, pancreas, spleen, thymus, and at high levels in the neonatal brain. Lower expression is found in adult brain and heart.

It is found in the cytoplasm. It localises to the membrane. It carries out the reaction L-seryl-[protein] + ATP = O-phospho-L-seryl-[protein] + ADP + H(+). It catalyses the reaction L-threonyl-[protein] + ATP = O-phospho-L-threonyl-[protein] + ADP + H(+). The catalysed reaction is L-tyrosyl-[protein] + ATP = O-phospho-L-tyrosyl-[protein] + ADP + H(+). Inhibited by serine/threonine phosphatase 2A. In terms of biological role, catalyzes the concomitant phosphorylation of a threonine and a tyrosine residue in a Thr-Glu-Tyr sequence located in MAP kinases. Activates the ERK1 and ERK2 MAP kinases. Activates BRAF in a KSR1 or KSR2-dependent manner; by binding to KSR1 or KSR2 releases the inhibitory intramolecular interaction between KSR1 or KSR2 protein kinase and N-terminal domains which promotes KSR1 or KSR2-BRAF dimerization and BRAF activation. This is Dual specificity mitogen-activated protein kinase kinase 2 (Map2k2) from Mus musculus (Mouse).